A 276-amino-acid polypeptide reads, in one-letter code: Undecaprenyl-diphosphatase (276 aa).

Transmembrane regions (helical) follow at residues 43–63 (RAMA…VWEF), 85–105 (GNLL…ADLI), 109–129 (LFNP…MLWA), 183–203 (AATE…AVYS), 214–234 (ADLP…MIAV), and 249–269 (FAWY…FGWV).

It belongs to the UppP family.

It is found in the cell inner membrane. The enzyme catalyses di-trans,octa-cis-undecaprenyl diphosphate + H2O = di-trans,octa-cis-undecaprenyl phosphate + phosphate + H(+). Its function is as follows. Catalyzes the dephosphorylation of undecaprenyl diphosphate (UPP). Confers resistance to bacitracin. This Pseudomonas putida (strain GB-1) protein is Undecaprenyl-diphosphatase.